Here is a 1178-residue protein sequence, read N- to C-terminus: Mediator of RNA polymerase II transcription subunit 14 (1178 aa).

The span at M1–T12 shows a compositional bias: polar residues. Disordered regions lie at residues M1–V50 and L1064–D1178. Composition is skewed to low complexity over residues P1074–A1112 and H1119–R1164.

It belongs to the Mediator complex subunit 14 family. As to quaternary structure, component of the Mediator complex.

It is found in the nucleus. Functionally, component of the Mediator complex, a coactivator involved in the regulated transcription of nearly all RNA polymerase II-dependent genes. Mediator functions as a bridge to convey information from gene-specific regulatory proteins to the basal RNA polymerase II transcription machinery. Mediator is recruited to promoters by direct interactions with regulatory proteins and serves as a scaffold for the assembly of a functional preinitiation complex with RNA polymerase II and the general transcription factors. This Chaetomium globosum (strain ATCC 6205 / CBS 148.51 / DSM 1962 / NBRC 6347 / NRRL 1970) (Soil fungus) protein is Mediator of RNA polymerase II transcription subunit 14 (RGR1).